The primary structure comprises 127 residues: Glycine cleavage system H protein (127 aa).

A Lipoyl-binding domain is found at 24–105; it reads TALVGITDFA…YNEGWIVKMK (82 aa). Lysine 65 is modified (N6-lipoyllysine).

Belongs to the GcvH family. As to quaternary structure, the glycine cleavage system is composed of four proteins: P, T, L and H. (R)-lipoate serves as cofactor.

In terms of biological role, the glycine cleavage system catalyzes the degradation of glycine. The H protein shuttles the methylamine group of glycine from the P protein to the T protein. This is Glycine cleavage system H protein from Chlorobaculum tepidum (strain ATCC 49652 / DSM 12025 / NBRC 103806 / TLS) (Chlorobium tepidum).